Reading from the N-terminus, the 121-residue chain is Conopressin-conophysin (121 aa).

A signal peptide spans 1 to 20 (MGRLTMALCWLLLLLLTTQA). Cysteines 21 and 26 form a disulfide. P27 is modified (4-hydroxyproline; partial; in Conopressin-ba1c). G29 is subject to Glycine amide. 7 cysteine pairs are disulfide-bonded: C43–C83, C46–C57, C51–C73, C58–C63, C90–C108, C102–C120, and C109–C114.

Belongs to the vasopressin/oxytocin family. As to expression, expressed by the venom duct.

Its subcellular location is the secreted. This chain is Conopressin-conophysin, found in Conus bayani (Bayan's cone).